The primary structure comprises 466 residues: MKHAHLSRRKRAAPRPPGGRQKRASATQLYQTCKAAGTCPPDVIPKVEGTTVADQILKYGSMGVYFGGLGIGSGAGTGGRSGYVPLGSRPASIPEPLPRPPVTIEPVGPSDPSIVSLLEESRLIEAGVPAPTFPTHGGFEISTSEVSTPAVLDVSSGGSDVHVSVTSFTNPTFTEPSVLRPPPPVEASGRLVISASSVSTHSYEEIPMDTFVITGDHNYNTTSTPIPGSRAPARLGLYGRATQQVRVVDPAFITTPARLVTYDNPAYEGVDDATLQFSHSDIHQPPDPDFLDIVALHRPALTSRKGTVRFSRLGQRATLTTRSGKRIGAKVHFYHDLSPIAPAESIELQPLSSQGELYDIYADVDGQEDAAAVANTPLNSNSSGIASPWNTTVPLSAGADVTLQSGPDVSLDAPVAESPVHPGVPLRPSAHIILYGGDFYLHPSYLGIRRKRKRMHNFFSDVYVAA.

The span at 1 to 13 (MKHAHLSRRKRAA) shows a compositional bias: basic residues. Residues 1 to 25 (MKHAHLSRRKRAAPRPPGGRQKRAS) are disordered. Residues 7-24 (SRRKRAAPRPPGGRQKRA) carry the Nuclear localization signal motif. Cys33 and Cys39 are disulfide-bonded. The Nuclear localization signal signature appears at 447–455 (GIRRKRKRM).

It belongs to the papillomaviridae L2 protein family. In terms of assembly, interacts with major capsid protein L1. Interacts with E2; this interaction inhibits E2 transcriptional activity but not the DNA replication function E2. Interacts with host GADD45GIP1. Interacts with host HSPA8; this interaction is required for L2 nuclear translocation. Interacts with host importins KPNB2 and KPNB3. Forms a complex with importin alpha2-beta1 heterodimers via interaction with the importin alpha2 adapter. Interacts with host DYNLT1; this interaction is essential for virus intracellular transport during entry. Interacts (via C-terminus) with host retromer subunits VPS35 and VPS29. Highly phosphorylated.

The protein resides in the virion. It localises to the host nucleus. It is found in the host early endosome. The protein localises to the host Golgi apparatus. Minor protein of the capsid that localizes along the inner surface of the virion, within the central cavities beneath the L1 pentamers. Plays a role in capsid stabilization through interaction with the major capsid protein L1. Once the virion enters the host cell, L2 escorts the genomic DNA into the nucleus by promoting escape from the endosomal compartments and traffic through the host Golgi network. Mechanistically, the C-terminus of L2 possesses a cell-penetrating peptide that protudes from the host endosome, interacts with host cytoplasmic retromer cargo and thereby mediates the capsid delivery to the host trans-Golgi network. Plays a role through its interaction with host dynein in the intracellular microtubule-dependent transport of viral capsid toward the nucleus. Mediates the viral genome import into the nucleus through binding to host importins. Once within the nucleus, L2 localizes viral genomes to host PML bodies in order to activate early gene expression for establishment of infection. Later on, promotes late gene expression by interacting with the viral E2 protein and by inhibiting its transcriptional activation functions. During virion assembly, encapsidates the genome by direct interaction with the viral DNA. The sequence is that of Minor capsid protein L2 from Macaca mulatta (Rhesus macaque).